A 179-amino-acid polypeptide reads, in one-letter code: Methylated-DNA--protein-cysteine methyltransferase, inducible (179 aa).

Catalysis depends on cysteine 141, which acts as the Nucleophile; methyl group acceptor.

The protein belongs to the MGMT family.

It catalyses the reaction a 6-O-methyl-2'-deoxyguanosine in DNA + L-cysteinyl-[protein] = S-methyl-L-cysteinyl-[protein] + a 2'-deoxyguanosine in DNA. It carries out the reaction a 4-O-methyl-thymidine in DNA + L-cysteinyl-[protein] = a thymidine in DNA + S-methyl-L-cysteinyl-[protein]. In terms of biological role, involved in the cellular defense against the biological effects of O6-methylguanine (O6-MeG) and O4-methylthymine (O4-MeT) in DNA. Repairs the methylated nucleobase in DNA by stoichiometrically transferring the methyl group to a cysteine residue in the enzyme. This is a suicide reaction: the enzyme is irreversibly inactivated. This chain is Methylated-DNA--protein-cysteine methyltransferase, inducible (adaB), found in Bacillus subtilis (strain 168).